Reading from the N-terminus, the 216-residue chain is MPLYVIDKPLTLHILTQLRDKNTDQINFRKNLVRLGRILGYEIANTLDYEIVEVETPLGARTKGIDITDLNNIVIINILRAAVPLVEGLLKAFPKARQGVIGASRVEVDGKEVPKDMDVYIYYKKIPNIRAKVDNVIIADPMIATASTMLKVLEEVVRASPKRIYIVSIISSEYGANKILSKYPFIYLFTVTIDPELNNKGYILPGLGDAGDRAFG.

A GTP-binding site is contributed by 30 to 34; it reads KNLVR. 5-phospho-alpha-D-ribose 1-diphosphate is bound by residues Arg-80, Arg-105, and 140 to 148; that span reads DPMIATAST. Uracil-binding positions include Ile-203 and 208–210; that span reads GDA. Position 209 (Asp-209) interacts with 5-phospho-alpha-D-ribose 1-diphosphate.

This sequence belongs to the UPRTase family. It depends on Mg(2+) as a cofactor.

It carries out the reaction UMP + diphosphate = 5-phospho-alpha-D-ribose 1-diphosphate + uracil. The protein operates within pyrimidine metabolism; UMP biosynthesis via salvage pathway; UMP from uracil: step 1/1. With respect to regulation, allosterically activated by GTP. Catalyzes the conversion of uracil and 5-phospho-alpha-D-ribose 1-diphosphate (PRPP) to UMP and diphosphate. The polypeptide is Uracil phosphoribosyltransferase (Saccharolobus islandicus (strain M.16.4 / Kamchatka #3) (Sulfolobus islandicus)).